A 193-amino-acid chain; its full sequence is Holliday junction branch migration complex subunit RuvA (193 aa).

The domain I stretch occupies residues 1 to 64 (MIGRIAGILL…EDAHLLYGFL (64 aa)). The tract at residues 65–139 (TPQERTTFRE…GKLGADLGAL (75 aa)) is domain II. The segment at 139-143 (LAGAA) is flexible linker. Residues 144–193 (SQSDHAADILNALVALGYSEKEGLAAIKNVPAGTGVSEGIKLALKALSKV) form a domain III region.

Belongs to the RuvA family. As to quaternary structure, homotetramer. Forms an RuvA(8)-RuvB(12)-Holliday junction (HJ) complex. HJ DNA is sandwiched between 2 RuvA tetramers; dsDNA enters through RuvA and exits via RuvB. An RuvB hexamer assembles on each DNA strand where it exits the tetramer. Each RuvB hexamer is contacted by two RuvA subunits (via domain III) on 2 adjacent RuvB subunits; this complex drives branch migration. In the full resolvosome a probable DNA-RuvA(4)-RuvB(12)-RuvC(2) complex forms which resolves the HJ.

The protein localises to the cytoplasm. In terms of biological role, the RuvA-RuvB-RuvC complex processes Holliday junction (HJ) DNA during genetic recombination and DNA repair, while the RuvA-RuvB complex plays an important role in the rescue of blocked DNA replication forks via replication fork reversal (RFR). RuvA specifically binds to HJ cruciform DNA, conferring on it an open structure. The RuvB hexamer acts as an ATP-dependent pump, pulling dsDNA into and through the RuvAB complex. HJ branch migration allows RuvC to scan DNA until it finds its consensus sequence, where it cleaves and resolves the cruciform DNA. This is Holliday junction branch migration complex subunit RuvA from Burkholderia ambifaria (strain ATCC BAA-244 / DSM 16087 / CCUG 44356 / LMG 19182 / AMMD) (Burkholderia cepacia (strain AMMD)).